The chain runs to 39 residues: Potassium channel toxin alpha-KTx 2.2 (39 aa).

Intrachain disulfides connect C7/C29, C13/C34, and C17/C36. Positions 37–39 (YPH) are interaction with Kv1.3 channels.

This sequence belongs to the short scorpion toxin superfamily. Potassium channel inhibitor family. Alpha-KTx 02 subfamily. As to expression, expressed by the venom gland.

Its subcellular location is the secreted. Its function is as follows. Potent inhibitor of voltage-gated potassium channels such as Kv1.1/KCNA1 (IC(50)=0.144 nM), Kv1.2/KCNA2 (IC(50)=0.675 nM), Kv1.3/KCNA3 (IC(50)=0.23 nM) and Shaker (Kd=160 nM). Suppresses expression of the Kv1.3/KCNA3 channel in lipopolysaccharide (LPS)-stimulated mouse macrophages. Down-regulates secretion of nitric oxide (NO) and inflammatory cytokines, such as TNF-alpha/TNF, IL-1beta/IL1B and IL6, in LPS-stimulated mouse macrophages in a manner dependent on Kv1.3/KCNA3 channel blockage. Reduces activation of MAPK and NF-kappa-B signaling pathways in LPS-stimulated mouse macrophages. Modulates intracellular Ca(2+) signaling in human PMA/ionomycin-triggered T-cells. Interferes with the activation of the MAPK, NF-kappa-B and NFATc1 pathways in human PMA/ionomycin-triggered T-cells. Reduces proliferation of human PMA/ionomycin-triggered T-cells. Down-regulates secretion of cytokines, such as TNF-alpha/TNF and IL2, in human PMA/ionomycin-triggered T-cells. This chain is Potassium channel toxin alpha-KTx 2.2, found in Centruroides margaritatus (Central American bark Scorpion).